The sequence spans 27 residues: DLWNSIKDMAAAAGRAALNAVTGMVNQ.

Its function is as follows. Has antimicrobial activity against the Gram-positive bacterium M.luteus and the yeast C.albicans. Has hemolytic activity on human and duck erythrocytes. The protein is Dermaseptin-like peptide of Schistosoma mansoni (Blood fluke).